Consider the following 69-residue polypeptide: Large ribosomal subunit protein bL31 (69 aa).

Zn(2+)-binding residues include cysteine 16, cysteine 18, cysteine 37, and cysteine 40.

It belongs to the bacterial ribosomal protein bL31 family. Type A subfamily. As to quaternary structure, part of the 50S ribosomal subunit. Zn(2+) is required as a cofactor.

In terms of biological role, binds the 23S rRNA. The sequence is that of Large ribosomal subunit protein bL31 from Syntrophotalea carbinolica (strain DSM 2380 / NBRC 103641 / GraBd1) (Pelobacter carbinolicus).